We begin with the raw amino-acid sequence, 547 residues long: Putative cysteine ligase BshC (547 aa).

A coiled-coil region spans residues 461–504 (ASTEATRSAIMDEMEALKQKVVRAEKRQQDEVRAQLKKAHTNLR).

It belongs to the BshC family.

The chain is Putative cysteine ligase BshC from Salinibacter ruber (strain DSM 13855 / M31).